The following is a 606-amino-acid chain: Flagellar WD repeat-containing protein Pf20 (606 aa).

A disordered region spans residues 229–250; sequence PLPGAERSLGGQSTAAAGGGAS. WD repeat units lie at residues 324 to 354, 366 to 396, 408 to 438, 450 to 480, 492 to 522, 534 to 564, and 576 to 606; these read GHLL…KMWH, GHKD…KIWD, DHKQ…RLWD, GHVD…SVWD, GHQN…KLWD, TGKH…KAYS, and GHED…RLWS.

In terms of assembly, inter-microtubule bridges in flagella.

The protein localises to the cell projection. The protein resides in the cilium. It localises to the flagellum. The chain is Flagellar WD repeat-containing protein Pf20 (PF20) from Chlamydomonas reinhardtii (Chlamydomonas smithii).